An 81-amino-acid chain; its full sequence is Fungal defensin micasin (81 aa).

The signal sequence occupies residues 1 to 21 (MQFTKLATILLVSLMGSAAIA). The propeptide occupies 22-43 (APATNNAAVDAAADATPAVEKR). Intrachain disulfides connect cysteine 47–cysteine 68, cysteine 54–cysteine 76, and cysteine 58–cysteine 78.

It belongs to the invertebrate defensin family.

The protein resides in the secreted. In terms of biological role, antibacterial peptide with potent activity against both Gram-positive and Gram-negative bacteria. May kill bacteria via an intracellular action mode to affect protein folding. Does not show effects on tested filamentous fungi or on the yeast S.cerevisiae. Does not act by destroying the membrane integrity, which is consistent with its nonamphiphilic architecture. Acts more rapidly than vancomycin, suggesting it does not act by inhibiting cell-wall biosynthesis. Does not cause hemolysis and has no cytotoxic effect on HEK cells. In vivo, is as efficient as vancomycin to protect mouse peritonitis models from S.aureus and P.aeruginosa infections. This chain is Fungal defensin micasin, found in Arthroderma otae (Microsporum canis).